The sequence spans 767 residues: Pre-mRNA-splicing factor ATP-dependent RNA helicase PRP43 (767 aa).

The interval 1 to 74 (MGSKRRFSSE…KLEDGKINPF (74 aa)) is disordered. 2 positions are modified to phosphoserine: S8 and S9. Over residues 58-70 (TSAEEAQKLEDGK) the composition is skewed to basic and acidic residues. In terms of domain architecture, Helicase ATP-binding spans 103–268 (LKLYQNNQIM…FNDAPLLAVP (166 aa)). ATP is bound at residue 116–123 (GETGSGKT). Positions 215-218 (DEAH) match the DEAH box motif. In terms of domain architecture, Helicase C-terminal spans 293-473 (TVLQIHATEE…STVLELKKLG (181 aa)).

It belongs to the DEAD box helicase family. DEAH subfamily. DDX15/PRP43 sub-subfamily. As to quaternary structure, component of the NTR complex (NTC-related complex), composed of NTR1, NTR2 and PRP43. Interacts with NTR1 and NTR2. Interacts with SPP382.

The protein resides in the nucleus. It catalyses the reaction ATP + H2O = ADP + phosphate + H(+). Its function is as follows. Pre-mRNA processing factor involved in disassembly of spliceosomes after the release of mature mRNA. This Saccharomyces cerevisiae (strain ATCC 204508 / S288c) (Baker's yeast) protein is Pre-mRNA-splicing factor ATP-dependent RNA helicase PRP43 (PRP43).